A 179-amino-acid chain; its full sequence is Adenylyl-sulfate kinase (179 aa).

13 to 20 (GLSGAGKS) provides a ligand contact to ATP. The active-site Phosphoserine intermediate is the Ser87.

The protein belongs to the APS kinase family.

The enzyme catalyses adenosine 5'-phosphosulfate + ATP = 3'-phosphoadenylyl sulfate + ADP + H(+). It participates in sulfur metabolism; hydrogen sulfide biosynthesis; sulfite from sulfate: step 2/3. Functionally, catalyzes the synthesis of activated sulfate. The protein is Adenylyl-sulfate kinase of Paraburkholderia xenovorans (strain LB400).